Consider the following 283-residue polypeptide: Undecaprenyl-diphosphatase (283 aa).

Helical transmembrane passes span 4–24 (LLIL…FLPI), 45–65 (ADLF…YEYW), 91–111 (QLGL…FTLA), 118–138 (LFNP…IFYV), 153–173 (VSLK…IPGT), 194–214 (AEFS…LDLL), 228–248 (ILGV…RWLV), and 258–278 (IFAW…WIFG).

Belongs to the UppP family.

The protein localises to the cell inner membrane. The enzyme catalyses di-trans,octa-cis-undecaprenyl diphosphate + H2O = di-trans,octa-cis-undecaprenyl phosphate + phosphate + H(+). In terms of biological role, catalyzes the dephosphorylation of undecaprenyl diphosphate (UPP). Confers resistance to bacitracin. This chain is Undecaprenyl-diphosphatase, found in Psychrobacter sp. (strain PRwf-1).